Consider the following 314-residue polypeptide: Replication initiation protein (314 aa).

Belongs to the plasmid replication initiation factor family.

In terms of biological role, this protein is probably a specific topoisomerase involved in initiating replication. This protein is specifically required and may be rate-limiting for replication of the plasmid in vivo. The polypeptide is Replication initiation protein (repC) (Staphylococcus aureus).